The chain runs to 149 residues: Large ribosomal subunit protein uL13 (149 aa).

The protein belongs to the universal ribosomal protein uL13 family. Part of the 50S ribosomal subunit.

In terms of biological role, this protein is one of the early assembly proteins of the 50S ribosomal subunit, although it is not seen to bind rRNA by itself. It is important during the early stages of 50S assembly. The sequence is that of Large ribosomal subunit protein uL13 from Gemmatimonas aurantiaca (strain DSM 14586 / JCM 11422 / NBRC 100505 / T-27).